Here is a 1099-residue protein sequence, read N- to C-terminus: Mediator of RNA polymerase II transcription subunit 5 (1099 aa).

The segment at 41-66 (DNDDAKTQEGSGSQDKTDVEESISKP) is disordered.

It belongs to the Mediator complex subunit 5 family. As to quaternary structure, component of the Mediator complex.

The protein localises to the nucleus. Its function is as follows. Component of the Mediator complex, a coactivator involved in the regulated transcription of nearly all RNA polymerase II-dependent genes. Mediator functions as a bridge to convey information from gene-specific regulatory proteins to the basal RNA polymerase II transcription machinery. Mediator is recruited to promoters by direct interactions with regulatory proteins and serves as a scaffold for the assembly of a functional preinitiation complex with RNA polymerase II and the general transcription factors. The sequence is that of Mediator of RNA polymerase II transcription subunit 5 (NUT1) from Candida glabrata (strain ATCC 2001 / BCRC 20586 / JCM 3761 / NBRC 0622 / NRRL Y-65 / CBS 138) (Yeast).